We begin with the raw amino-acid sequence, 877 residues long: Phosphoenolpyruvate carboxylase (877 aa).

Residues histidine 138 and lysine 543 contribute to the active site.

Belongs to the PEPCase type 1 family. Mg(2+) serves as cofactor.

It catalyses the reaction oxaloacetate + phosphate = phosphoenolpyruvate + hydrogencarbonate. Forms oxaloacetate, a four-carbon dicarboxylic acid source for the tricarboxylic acid cycle. This chain is Phosphoenolpyruvate carboxylase, found in Aeromonas hydrophila subsp. hydrophila (strain ATCC 7966 / DSM 30187 / BCRC 13018 / CCUG 14551 / JCM 1027 / KCTC 2358 / NCIMB 9240 / NCTC 8049).